Reading from the N-terminus, the 179-residue chain is Large ribosomal subunit protein uL6 (179 aa).

Belongs to the universal ribosomal protein uL6 family. In terms of assembly, part of the 50S ribosomal subunit.

Functionally, this protein binds to the 23S rRNA, and is important in its secondary structure. It is located near the subunit interface in the base of the L7/L12 stalk, and near the tRNA binding site of the peptidyltransferase center. The chain is Large ribosomal subunit protein uL6 from Bacillus velezensis (strain DSM 23117 / BGSC 10A6 / LMG 26770 / FZB42) (Bacillus amyloliquefaciens subsp. plantarum).